The following is a 178-amino-acid chain: Large ribosomal subunit protein uL6 (178 aa).

It belongs to the universal ribosomal protein uL6 family. In terms of assembly, part of the 50S ribosomal subunit.

In terms of biological role, this protein binds to the 23S rRNA, and is important in its secondary structure. It is located near the subunit interface in the base of the L7/L12 stalk, and near the tRNA binding site of the peptidyltransferase center. This is Large ribosomal subunit protein uL6 from Methanobrevibacter smithii (strain ATCC 35061 / DSM 861 / OCM 144 / PS).